The following is a 454-amino-acid chain: tRNA modification GTPase MnmE (454 aa).

Positions 23, 80, and 120 each coordinate (6S)-5-formyl-5,6,7,8-tetrahydrofolate. The TrmE-type G domain maps to 216–377; that stretch reads GMKVVIAGRP…LRNHLKQSMG (162 aa). Asn-226 contributes to the K(+) binding site. GTP-binding positions include 226 to 231, 245 to 251, 270 to 273, 335 to 338, and 358 to 360; these read NAGKSS, TDIAGTT, DTAG, NKAD, and SAR. Ser-230 is a Mg(2+) binding site. The K(+) site is built by Thr-245, Ile-247, and Thr-250. Position 251 (Thr-251) interacts with Mg(2+). A (6S)-5-formyl-5,6,7,8-tetrahydrofolate-binding site is contributed by Lys-454.

It belongs to the TRAFAC class TrmE-Era-EngA-EngB-Septin-like GTPase superfamily. TrmE GTPase family. Homodimer. Heterotetramer of two MnmE and two MnmG subunits. K(+) serves as cofactor.

Its subcellular location is the cytoplasm. In terms of biological role, exhibits a very high intrinsic GTPase hydrolysis rate. Involved in the addition of a carboxymethylaminomethyl (cmnm) group at the wobble position (U34) of certain tRNAs, forming tRNA-cmnm(5)s(2)U34. The protein is tRNA modification GTPase MnmE of Enterobacter sp. (strain 638).